Here is a 474-residue protein sequence, read N- to C-terminus: ABHD16B (474 aa).

Residues Val175–Val293 enclose the AB hydrolase-1 domain. Active-site charge relay system residues include Ser248, Asp323, and His423.

This sequence belongs to the AB hydrolase superfamily. ABHD16 family.

The enzyme catalyses a 1,2-diacyl-sn-glycero-3-phospho-L-serine + H2O = a 2-acyl-sn-glycero-3-phospho-L-serine + a fatty acid + H(+). It carries out the reaction a 1-acylglycerol + H2O = glycerol + a fatty acid + H(+). The catalysed reaction is 1-(9Z-octadecenoyl)-glycerol + H2O = glycerol + (9Z)-octadecenoate + H(+). In terms of biological role, hydrolyzes the sn-1 position of glycerophospholipids with high specificity towards phosphatidylserine (PS), PS-PLA1 enzyme. Also hydrolyzes the acyl chain of glycerolipids with a preference for the monoacylglycerol (MAG) 1-acylglycerol, MAG lipase. Plays a regulatory role in cellular lipid homeostasis by modulating genes involved in neutral lipid degradation and in phospholipid synthesis and composition. This chain is ABHD16B, found in Rattus norvegicus (Rat).